Here is a 119-residue protein sequence, read N- to C-terminus: UPF0212 protein Mlab_0931 (119 aa).

This sequence belongs to the UPF0212 family.

This Methanocorpusculum labreanum (strain ATCC 43576 / DSM 4855 / Z) protein is UPF0212 protein Mlab_0931.